The following is a 753-amino-acid chain: Polyribonucleotide nucleotidyltransferase (753 aa).

Positions 488 and 494 each coordinate Mg(2+). In terms of domain architecture, KH spans 555 to 614 (PRLLRTKISPDKIGALIGPGGKNIRGIQETTGAVIEVDDEGTVLVASSNKESAQEAMRQV). The region spanning 624–692 (GKIYDGTVSS…EHDRVKLSRR (69 aa)) is the S1 motif domain. Acidic residues predominate over residues 698 to 719 (LGEEDPLAVEGEGGGDSEGGGD). The disordered stretch occupies residues 698–753 (LGEEDPLAVEGEGGGDSEGGGDGEDRPRRRRGGSGGGGGGGRGRGPRRSGGGRDRD). Residues 730–740 (GSGGGGGGGRG) are compositionally biased toward gly residues.

It belongs to the polyribonucleotide nucleotidyltransferase family. It depends on Mg(2+) as a cofactor.

The protein resides in the cytoplasm. The catalysed reaction is RNA(n+1) + phosphate = RNA(n) + a ribonucleoside 5'-diphosphate. Functionally, involved in mRNA degradation. Catalyzes the phosphorolysis of single-stranded polyribonucleotides processively in the 3'- to 5'-direction. In Rhodopirellula baltica (strain DSM 10527 / NCIMB 13988 / SH1), this protein is Polyribonucleotide nucleotidyltransferase.